The following is a 211-amino-acid chain: Histidine biosynthesis bifunctional protein HisIE (211 aa).

The phosphoribosyl-AMP cyclohydrolase stretch occupies residues 1 to 118 (MNVDDLTFDD…IYGASDRFGI (118 aa)). Residues 119 to 211 (IATLEALIAE…LEERHRPKEE (93 aa)) are phosphoribosyl-ATP pyrophosphohydrolase.

The protein in the N-terminal section; belongs to the PRA-CH family. This sequence in the C-terminal section; belongs to the PRA-PH family.

The protein localises to the cytoplasm. It carries out the reaction 1-(5-phospho-beta-D-ribosyl)-ATP + H2O = 1-(5-phospho-beta-D-ribosyl)-5'-AMP + diphosphate + H(+). It catalyses the reaction 1-(5-phospho-beta-D-ribosyl)-5'-AMP + H2O = 1-(5-phospho-beta-D-ribosyl)-5-[(5-phospho-beta-D-ribosylamino)methylideneamino]imidazole-4-carboxamide. The protein operates within amino-acid biosynthesis; L-histidine biosynthesis; L-histidine from 5-phospho-alpha-D-ribose 1-diphosphate: step 2/9. It functions in the pathway amino-acid biosynthesis; L-histidine biosynthesis; L-histidine from 5-phospho-alpha-D-ribose 1-diphosphate: step 3/9. This is Histidine biosynthesis bifunctional protein HisIE (hisI) from Halalkalibacterium halodurans (strain ATCC BAA-125 / DSM 18197 / FERM 7344 / JCM 9153 / C-125) (Bacillus halodurans).